Consider the following 330-residue polypeptide: MDRVLPFRFAEEEGVFWLLDQRRLPQEEVYVPVRTAREMAQAIRDMVVRGAPAIGVSAAFGMVLAHLAGEDLEEADRRLRASRPTAVNLFHALDRMRPFWGDLAGSLLEARRIWREVEETEAAISRHGAQILWGQVLTHCNTGPLATGGYGTALGAIVEAYRLGRVRHVWVDETRPYLQGARLTAYELQKAGVPATLITDSMAGWLMARGAVDAVVVGVDRMALNGDFANKVGTYALAVLAHHHGIPFYAALPLSSVDPRLASGEGIPIEERSPEEVVAFRGVRIAPEGFPAYHPAFDVTPHRYLTGIITEKGVLYPPFAEGLRRALGLD.

Substrate-binding positions include 49 to 51 (RGA), Arg83, and Gln179. The Proton donor role is filled by Asp220. 230 to 231 (NK) lines the substrate pocket.

This sequence belongs to the eIF-2B alpha/beta/delta subunits family. MtnA subfamily.

It carries out the reaction 5-(methylsulfanyl)-alpha-D-ribose 1-phosphate = 5-(methylsulfanyl)-D-ribulose 1-phosphate. Its pathway is amino-acid biosynthesis; L-methionine biosynthesis via salvage pathway; L-methionine from S-methyl-5-thio-alpha-D-ribose 1-phosphate: step 1/6. In terms of biological role, catalyzes the interconversion of methylthioribose-1-phosphate (MTR-1-P) into methylthioribulose-1-phosphate (MTRu-1-P). In Thermus thermophilus (strain ATCC BAA-163 / DSM 7039 / HB27), this protein is Methylthioribose-1-phosphate isomerase.